The chain runs to 237 residues: D-aminoacyl-tRNA deacylase (237 aa).

Belongs to the DtdA deacylase family. As to quaternary structure, monomer. Zn(2+) is required as a cofactor.

It catalyses the reaction a D-aminoacyl-tRNA + H2O = a tRNA + a D-alpha-amino acid + H(+). The catalysed reaction is glycyl-tRNA(Ala) + H2O = tRNA(Ala) + glycine + H(+). D-aminoacyl-tRNA deacylase with broad substrate specificity. By recycling D-aminoacyl-tRNA to D-amino acids and free tRNA molecules, this enzyme counteracts the toxicity associated with the formation of D-aminoacyl-tRNA entities in vivo. The chain is D-aminoacyl-tRNA deacylase from Saccharolobus islandicus (strain Y.N.15.51 / Yellowstone #2) (Sulfolobus islandicus).